The following is a 930-amino-acid chain: Serine/threonine-protein kinase ATG1 (930 aa).

The Protein kinase domain occupies phenylalanine 23 to valine 326. ATP-binding positions include isoleucine 29–valine 37 and lysine 52. Aspartate 166 functions as the Proton acceptor in the catalytic mechanism. Disordered stretches follow at residues aspartate 336–glutamate 468, glycine 504–proline 563, isoleucine 853–glutamate 874, and asparagine 904–threonine 930. The span at aspartate 337–arginine 350 shows a compositional bias: basic and acidic residues. The segment covering serine 377 to serine 393 has biased composition (low complexity). Polar residues-rich tracts occupy residues arginine 400 to glycine 417 and glycine 504 to alanine 531. The ATG13-binding stretch occupies residues alanine 629–glutamine 897.

The protein belongs to the protein kinase superfamily. Ser/Thr protein kinase family. APG1/unc-51/ULK1 subfamily. In terms of assembly, homodimer. Dimerization requires the presence of ATG13. Forms a ternary complex with ATG13 and ATG17.

It localises to the cytoplasm. The protein localises to the preautophagosomal structure membrane. The enzyme catalyses L-seryl-[protein] + ATP = O-phospho-L-seryl-[protein] + ADP + H(+). It carries out the reaction L-threonyl-[protein] + ATP = O-phospho-L-threonyl-[protein] + ADP + H(+). Functionally, serine/threonine protein kinase involved in the cytoplasm to vacuole transport (Cvt) and found to be essential in autophagy, where it is required for the formation of autophagosomes. Involved in the clearance of protein aggregates which cannot be efficiently cleared by the proteasome. Required for selective autophagic degradation of the nucleus (nucleophagy) as well as for mitophagy which contributes to regulate mitochondrial quantity and quality by eliminating the mitochondria to a basal level to fulfill cellular energy requirements and preventing excess ROS production. Also involved in endoplasmic reticulum-specific autophagic process, in selective removal of ER-associated degradation (ERAD) substrates. Plays a key role in ATG9 and ATG23 cycling through the pre-autophagosomal structure and is necessary to promote ATG18 binding to ATG9 through phosphorylation of ATG9. Catalyzes phosphorylation of ATG4, decreasing the interaction between ATG4 and ATG8 and impairing deconjugation of PE-conjugated forms of ATG8. Contributes to conidiation by regulating the conidial levels of the conidiation-related protein CP15 and mediates fungal oxidation resistance by controlling total superoxide dismutase (SOD) activity. In Beauveria bassiana (strain ARSEF 2860) (White muscardine disease fungus), this protein is Serine/threonine-protein kinase ATG1.